Reading from the N-terminus, the 358-residue chain is Arogenate dehydrogenase 2, chloroplastic (358 aa).

The transit peptide at 1-36 directs the protein to the chloroplast; it reads MLLHFSPAKPLISPPNLRRNSPTFLISPPRSLRIRA. The 280-residue stretch at 59–338 folds into the Prephenate/arogenate dehydrogenase domain; sequence LKIAVLGFGN…KKTEQKLLND (280 aa). Positions 336–358 are disordered; it reads LNDGGVVPMNDISSSSSSSSSSS. Over residues 348 to 358 the composition is skewed to low complexity; the sequence is SSSSSSSSSSS.

Belongs to the prephenate/arogenate dehydrogenase family. Expressed in roots, stems, leaves, flowers, siliques and seeds. More abundant in seeds.

It is found in the plastid. It localises to the chloroplast. The catalysed reaction is L-arogenate + NADP(+) = L-tyrosine + CO2 + NADPH. It participates in amino-acid biosynthesis; L-tyrosine biosynthesis; L-tyrosine from L-arogenate (NADP(+) route): step 1/1. Involved in the biosynthesis of tyrosine. Has a weak prephenate dehydrogenase activity. The protein is Arogenate dehydrogenase 2, chloroplastic (TYRAAT2) of Arabidopsis thaliana (Mouse-ear cress).